The following is a 1107-amino-acid chain: MAKMEVKSSLLDNMIGVGDMVLLEPLNEETFIDNLKKRFDHNEIYTYIGSVVISVNPYRSLPIYSPEKVEDYRNRNFYELSPHIFALSDEAYRSLRDQDKDQCILITGESGAGKTEASKLVMSYVAAVCGKGAEVNQVKEQLLQSNPVLEAFGNAKTVRNDNSSRFGKYMDIEFDFKGDPLGGVISNYLLEKSRVVKQPRGERNFHVFYQLLSGASEELLYKLKLERDFSRYNYLSLDSAKVNGVDDAANFRTVRNAMQIVGFLDHEAEAVLEVVAAVLKLGNIEFKPESRVNGLDESKIKDKNELKEICELTSIDQVVLERAFSFRTVEAKQEKVSTTLNVAQAYYARDALAKNLYSRLFSWLVNRINESIKAQTKVRKKVMGVLDIYGFEIFEDNSFEQFIINYCNEKLQQIFIELTLKEEQEEYIREDIEWTHIDYFNNAIICDLIENNTNGILAMLDEECLRPGTVTDETFLEKLNQVCATHQHFESRMSKCSRFLNDTTLPHSCFRIQHYAGKVLYQVEGFVDKNNDLLYRDLSQAMWKAGHSLIKSLFPEGNPAKVNLKRPPTAGSQFKASVATLMRNLQTKNPNYIRCIKPNDKKAAHIFNESLVCHQIRYLGLLENVRVRRAGYAFRQAYEPCLERYKMLCKQTWPHWKGPARSGVEVLFNELEIPVEEHSFGRSKIFIRNPRTLFQLEDLRKQRLEDLATLIQKIYRGWKCRTHFLLMKRSQVVIAAWYRRYAQQKRYQQIKSSALVIQSYIRGWKARKILRELKHQKRCKEAATTIAAYWHGTQARRELKRLKEEARRKHAVAVIWAYWLGLKVRREYRKFFRANAGKKIYEFTLQRIVQKYLLEMKNKMPSLSPIDKNWPSRPYLFLDSTHKELKRIFHLWRCKKYRDQFTDQQKLIYEEKLEASELFKDKKALYPSSVGQPFQGAYLEINKNPKYKKLKDAIEEKIIIAEVVNKINRANGKSTSRIFLLTNNNLLLADQKSGQIKSEVPLVDVTKVSMSSQNDGFFAVHLKEGSEAASKGDFLFSSDHLIEMATKLYRTTLSQTKQKLNIEISDEFLVQFRQDKVCVKFIQGNQKNGSVPTCKRKNNRLLEVAVP.

One can recognise a Myosin motor domain in the interval 15–701 (IGVGDMVLLE…TLFQLEDLRK (687 aa)). Position 60 is a phosphoserine (Ser-60). 108–115 (GESGAGKT) is an ATP binding site. Residue Lys-287 forms a Glycyl lysine isopeptide (Lys-Gly) (interchain with G-Cter in SUMO1); alternate linkage. A Glycyl lysine isopeptide (Lys-Gly) (interchain with G-Cter in SUMO2); alternate cross-link involves residue Lys-287. The interval 592–599 (YIRCIKPN) is actin-binding. 5 IQ domains span residues 704-727 (LEDL…FLLM), 728-749 (KRSQ…RYQQ), 750-778 (IKSS…HQKR), 780-807 (KEAA…EEAR), and 808-837 (RKHA…ANAG). Positions 923–1107 (KALYPSSVGQ…NNRLLEVAVP (185 aa)) constitute a TH1 domain.

Belongs to the TRAFAC class myosin-kinesin ATPase superfamily. Myosin family. As to expression, prominent expression is seen in the brain, lung and liver. It is also expressed in the heart and testis. A high level expression is seen in virtually all neurons (but not glia) in the postnatal and adult mouse brain and in neuroblasts of the cerebellar external granular layer.

Its function is as follows. Motor protein that may participate in process critical to neuronal development and function such as cell migration, neurite outgrowth and vesicular transport. The polypeptide is Unconventional myosin-Ib (Myo1b) (Mus musculus (Mouse)).